A 155-amino-acid polypeptide reads, in one-letter code: Ribonuclease H (155 aa).

The 142-residue stretch at 1-142 folds into the RNase H type-1 domain; that stretch reads MLKQVEIFTD…CDELARAAAM (142 aa). Positions 10, 48, 70, and 134 each coordinate Mg(2+).

Belongs to the RNase H family. In terms of assembly, monomer. Mg(2+) serves as cofactor.

The protein localises to the cytoplasm. It catalyses the reaction Endonucleolytic cleavage to 5'-phosphomonoester.. In terms of biological role, endonuclease that specifically degrades the RNA of RNA-DNA hybrids. This Salmonella paratyphi C (strain RKS4594) protein is Ribonuclease H.